A 626-amino-acid chain; its full sequence is PEX5-related protein (626 aa).

Disordered stretches follow at residues 1–20 (MYQG…LSSD), 118–167 (VSQT…SSLD), and 181–235 (KFHG…ASEL). The segment covering 181–198 (KFHGDRNTKGHPMAERKS) has biased composition (basic and acidic residues). Serine 205 carries the phosphoserine modification. Residues 225–235 (SALNSESASEL) show a composition bias toward low complexity. Serine 253, serine 257, and serine 261 each carry phosphoserine. 3 TPR repeats span residues 326 to 359 (WPGA…DPGD), 360 to 393 (AEAW…QPNN), and 395 to 427 (KALM…NPKY). Phosphoserine occurs at positions 445 and 447. 3 TPR repeats span residues 474–507 (PDLQ…RPED), 509–541 (SLWN…QPGF), and 543–575 (RSRY…QRKS).

Belongs to the peroxisomal targeting signal receptor family. As to quaternary structure, interacts with RAB8B. Forms an obligate 4:4 complex with HCN2. May interact with the C-terminal PTS1-type tripeptide peroxisomal targeting signal (SKL-type); the relevance of such interaction is however unclear. Interacts with HCN3. Interacts with HCN4 with a 4:4 HCN4:PEX5L stoichiometry; reduces the effects of cAMP on the voltage-dependence and rate of activation of HCN4. Mainly expressed in brain. Also expressed in pancreas, testis and pituitary.

Its subcellular location is the cytoplasm. The protein localises to the membrane. Accessory subunit of hyperpolarization-activated cyclic nucleotide-gated (HCN) channels, regulating their cell-surface expression and cyclic nucleotide dependence. This chain is PEX5-related protein (PEX5L), found in Homo sapiens (Human).